The primary structure comprises 251 residues: Small ribosomal subunit protein uS2 (251 aa).

The protein belongs to the universal ribosomal protein uS2 family.

The chain is Small ribosomal subunit protein uS2 from Cereibacter sphaeroides (strain ATCC 17029 / ATH 2.4.9) (Rhodobacter sphaeroides).